We begin with the raw amino-acid sequence, 369 residues long: 3-isopropylmalate dehydrogenase (369 aa).

77–90 (GPKWDDLPFDKKPE) is an NAD(+) binding site. 4 residues coordinate substrate: arginine 97, arginine 107, arginine 135, and aspartate 226. 3 residues coordinate Mg(2+): aspartate 226, aspartate 250, and aspartate 254. NAD(+) is bound at residue 289–301 (GSAPDIAGKDMAN).

Belongs to the isocitrate and isopropylmalate dehydrogenases family. LeuB type 1 subfamily. As to quaternary structure, homodimer. Mg(2+) is required as a cofactor. Mn(2+) serves as cofactor.

The protein resides in the cytoplasm. The enzyme catalyses (2R,3S)-3-isopropylmalate + NAD(+) = 4-methyl-2-oxopentanoate + CO2 + NADH. It participates in amino-acid biosynthesis; L-leucine biosynthesis; L-leucine from 3-methyl-2-oxobutanoate: step 3/4. Catalyzes the oxidation of 3-carboxy-2-hydroxy-4-methylpentanoate (3-isopropylmalate) to 3-carboxy-4-methyl-2-oxopentanoate. The product decarboxylates to 4-methyl-2 oxopentanoate. This chain is 3-isopropylmalate dehydrogenase, found in Paramagnetospirillum magneticum (strain ATCC 700264 / AMB-1) (Magnetospirillum magneticum).